A 127-amino-acid polypeptide reads, in one-letter code: Small ribosomal subunit protein uS8m (127 aa).

The protein belongs to the universal ribosomal protein uS8 family.

The protein resides in the mitochondrion. In Acanthamoeba castellanii (Amoeba), this protein is Small ribosomal subunit protein uS8m (RPS8).